Here is a 480-residue protein sequence, read N- to C-terminus: UDP-glucose 6-dehydrogenase 3 (480 aa).

NAD(+)-binding positions include 8 to 13 (GAGYVG), Asp33, Arg38, 86 to 90 (VNTPT), 127 to 128 (ST), and Glu161. Residues 157–161 (EFLAE), 216–223 (KLAANAFL), and 256–269 (RIGP…VGFG) contribute to the substrate site. Cys272 functions as the Nucleophile in the catalytic mechanism. 272–275 (CFQK) lines the NAD(+) pocket. 334-335 (FK) is a substrate binding site. Position 342 (Arg342) interacts with NAD(+). Residue Arg447 participates in substrate binding.

It belongs to the UDP-glucose/GDP-mannose dehydrogenase family.

The enzyme catalyses UDP-alpha-D-glucose + 2 NAD(+) + H2O = UDP-alpha-D-glucuronate + 2 NADH + 3 H(+). It functions in the pathway nucleotide-sugar biosynthesis; UDP-alpha-D-glucuronate biosynthesis; UDP-alpha-D-glucuronate from UDP-alpha-D-glucose: step 1/1. Its activity is regulated as follows. Inhibited by UDP-xylose. Functionally, involved in the biosynthesis of UDP-glucuronic acid (UDP-GlcA), providing nucleotide sugars for cell-wall polymers. Required for the formation of cell wall ingrowths on the outer cell walls of nematode-induced syncytia. This chain is UDP-glucose 6-dehydrogenase 3 (UGD3), found in Arabidopsis thaliana (Mouse-ear cress).